A 414-amino-acid polypeptide reads, in one-letter code: Wilms tumor protein homolog A (414 aa).

Glycyl lysine isopeptide (Lys-Gly) (interchain with G-Cter in SUMO) cross-links involve residues K55 and K158. Positions 217-225 (MTWNQMNLG) match the 9aaTAD motif. 3 consecutive C2H2-type zinc fingers follow at residues 288–312 (FMCAYPGCNKRYFKLSHLQMHSRKH), 318–342 (YQCDFKDCERRFSRSDQLKRHQRRH), and 348–370 (FQCKTCQRKFSRSDHLKTHTRTH). 2 important for interaction with target DNA regions span residues 332–346 (SDQLKRHQRRHTGIK) and 358–366 (SRSDHLKTH). The KTS motif signature appears at 373-375 (KTS). Residues 379–403 (FSCRWPSCQKKFARSDELVRHHNMH) form a C2H2-type 4 zinc finger.

The protein belongs to the EGR C2H2-type zinc-finger protein family. As to expression, expressed around the pronephric anlage and in the pronephros; expression is restricted to the splanchnic mesoderm (the site where the glomus forms) from tailbud stages, and the glomus of early tadpoles. Not expressed in the pronephric tubules or pronephric duct. In tadpoles (stage 38-39), additional expression begins in the heart. Also expressed in the adult kidney (mesonephros).

The protein localises to the nucleus. The protein resides in the cytoplasm. It is found in the nucleus speckle. Its function is as follows. Transcription factor required for development of the vascular component of the pronephric kidney, the glomus; may repress tubule-specific gene expression in the portion of the pronephros fated to form the glomus. Recognizes and binds to the DNA sequence 5'-GCG(T/G)GGGCG-3'. Inhibits Wnt-signaling during embryonic development. Function may be isoform-specific: the isoform containing the KTS motif is less effective in inhibiting wnt signaling. The chain is Wilms tumor protein homolog A (wt1-a) from Xenopus laevis (African clawed frog).